The sequence spans 644 residues: Exoribonuclease 2 (644 aa).

One can recognise an RNB domain in the interval 189-516 (RQDLTALNFV…NHRLLKAVIK (328 aa)). An S1 motif domain is found at 561–643 (NTRFAAEIID…ETRSIIARPA (83 aa)).

Belongs to the RNR ribonuclease family. RNase II subfamily.

It is found in the cytoplasm. The catalysed reaction is Exonucleolytic cleavage in the 3'- to 5'-direction to yield nucleoside 5'-phosphates.. Its function is as follows. Involved in mRNA degradation. Hydrolyzes single-stranded polyribonucleotides processively in the 3' to 5' direction. The protein is Exoribonuclease 2 of Salmonella agona (strain SL483).